The following is a 744-amino-acid chain: 6-phosphofructo-2-kinase/fructose-2,6-bisphosphatase (744 aa).

Disordered stretches follow at residues Met-1–Leu-23 and Arg-213–Pro-245. A lipid anchor (N-myristoyl glycine) is attached at Gly-2. The CBM20 domain occupies Asn-17–Leu-122. Over residues Arg-213 to Arg-232 the composition is skewed to polar residues. Phosphoserine; by CPK3 is present on Ser-220. A phosphoserine mark is found at Ser-276 and Ser-295. A 6-phosphofructo-2-kinase region spans residues Ser-301 to Thr-549. Ser-303 carries the post-translational modification Phosphoserine; by CPK3. Gly-349–Phe-357 contributes to the ATP binding site. Beta-D-fructose 6-phosphate contacts are provided by Arg-382 and Arg-406. Asp-431 is an active-site residue. The beta-D-fructose 6-phosphate site is built by Thr-433 and Arg-439. Residue Cys-460 is part of the active site. Asn-469 to Ile-474 contributes to the ATP binding site. Beta-D-fructose 6-phosphate-binding residues include Arg-496 and Tyr-500. Positions Pro-550–Asp-744 are fructose-2,6-bisphosphatase. Residue Arg-557 coordinates beta-D-fructose 2,6-bisphosphate. His-558 functions as the Tele-phosphohistidine intermediate in the catalytic mechanism. Residues Asn-564 and Gly-570 each contribute to the beta-D-fructose 2,6-bisphosphate site. The active-site Proton donor/acceptor is the Glu-630. Residues Tyr-641, Arg-655, Lys-659, Tyr-670, Gln-697, and Arg-701 each coordinate beta-D-fructose 2,6-bisphosphate. ATP is bound at residue Tyr-652–Arg-655. ATP is bound at residue Gln-697–Arg-701.

This sequence in the C-terminal section; belongs to the phosphoglycerate mutase family. Interacts with 14-3-3 proteins; these interactions may regulate both nitrate assimilation and sucrose/starch partitioning in leaves during the diurnal cycle. Post-translationally, phosphorylation at Ser-220 and Ser-303 by CPK3 promotes 14-3-3 proteins binding.

It is found in the membrane. It localises to the cytoplasm. The catalysed reaction is beta-D-fructose 2,6-bisphosphate + H2O = beta-D-fructose 6-phosphate + phosphate. It carries out the reaction beta-D-fructose 6-phosphate + ATP = beta-D-fructose 2,6-bisphosphate + ADP + H(+). Its activity is regulated as follows. 6-phosphofructo-2-kinase activity is activated by pyruvate. 6-phosphofructo-2-kinase activity is inhibited by PPi, phosphoenolpyruvate and 2-phosphoglycerate. Fructose-2,6-bisphosphatase activity is inhibited by pyruvate, fructose 1,6-bisphosphate and 6-phosphogluconate. In terms of biological role, synthesis and degradation of fructose 2,6-bisphosphate. Regulates carbon partitioning between sucrose versus starch during the diurnal cycle. The protein is 6-phosphofructo-2-kinase/fructose-2,6-bisphosphatase (FKFBP) of Arabidopsis thaliana (Mouse-ear cress).